The chain runs to 1020 residues: Probable beta-galactosidase B (1020 aa).

The N-terminal stretch at 1-22 is a signal peptide; that stretch reads MLISKTVLSGLALGASFVGVSA. N25 carries N-linked (GlcNAc...) asparagine glycosylation. Y90 contacts substrate. N111 is a glycosylation site (N-linked (GlcNAc...) asparagine). Substrate-binding residues include N135, A136, and E137. N172 is a glycosylation site (N-linked (GlcNAc...) asparagine). N195 serves as a coordination point for substrate. Catalysis depends on E196, which acts as the Proton donor. N210 and N251 each carry an N-linked (GlcNAc...) asparagine glycan. Residue Y264 coordinates substrate. A disulfide bridge links C270 with C323. N-linked (GlcNAc...) asparagine glycosylation is present at N271. E307 functions as the Nucleophile in the catalytic mechanism. Position 372 (Y372) interacts with substrate. N-linked (GlcNAc...) asparagine glycans are attached at residues N410, N455, N549, N596, N625, N702, N747, N785, N819, N880, and N919.

This sequence belongs to the glycosyl hydrolase 35 family.

The protein localises to the secreted. It carries out the reaction Hydrolysis of terminal non-reducing beta-D-galactose residues in beta-D-galactosides.. Cleaves beta-linked terminal galactosyl residues from gangliosides, glycoproteins, and glycosaminoglycans. This is Probable beta-galactosidase B (lacB) from Aspergillus flavus (strain ATCC 200026 / FGSC A1120 / IAM 13836 / NRRL 3357 / JCM 12722 / SRRC 167).